Reading from the N-terminus, the 121-residue chain is Small ribosomal subunit protein uS13 (121 aa).

The segment at 95 to 121 (LPVRGQNTKNNARTRKGKAVAIAGKKK) is disordered. Residues 106–121 (ARTRKGKAVAIAGKKK) are compositionally biased toward basic residues.

Belongs to the universal ribosomal protein uS13 family. Part of the 30S ribosomal subunit. Forms a loose heterodimer with protein S19. Forms two bridges to the 50S subunit in the 70S ribosome.

In terms of biological role, located at the top of the head of the 30S subunit, it contacts several helices of the 16S rRNA. In the 70S ribosome it contacts the 23S rRNA (bridge B1a) and protein L5 of the 50S subunit (bridge B1b), connecting the 2 subunits; these bridges are implicated in subunit movement. Contacts the tRNAs in the A and P-sites. The polypeptide is Small ribosomal subunit protein uS13 (Streptococcus equi subsp. zooepidemicus (strain H70)).